Reading from the N-terminus, the 864-residue chain is Ribosome biogenesis protein ERB1 (864 aa).

Basic and acidic residues predominate over residues methionine 1–isoleucine 52. 2 disordered regions span residues methionine 1–glycine 153 and glutamate 191–aspartate 231. Over residues leucine 53–aspartate 71 the composition is skewed to acidic residues. The segment covering lysine 72–glutamate 83 has biased composition (basic and acidic residues). A compositionally biased stretch (acidic residues) spans aspartate 100–alanine 135. WD repeat units follow at residues alanine 509–threonine 549, alanine 559–tyrosine 599, asparagine 694–threonine 732, proline 735–lysine 774, tyrosine 778–glutamine 817, and glutamine 833–proline 864.

The protein belongs to the WD repeat BOP1/ERB1 family. In terms of assembly, component of the NOP7 complex, composed of ERB1, NOP7 and YTM1. The complex is held together by ERB1, which interacts with NOP7 via its N-terminal domain and with YTM1 via a high-affinity interaction between the seven-bladed beta-propeller domains of the 2 proteins. The NOP7 complex associates with the 66S pre-ribosome.

The protein localises to the nucleus. It is found in the nucleolus. It localises to the nucleoplasm. Functionally, component of the NOP7 complex, which is required for maturation of the 25S and 5.8S ribosomal RNAs and formation of the 60S ribosome. The chain is Ribosome biogenesis protein ERB1 from Malassezia globosa (strain ATCC MYA-4612 / CBS 7966) (Dandruff-associated fungus).